Here is a 159-residue protein sequence, read N- to C-terminus: MSGLKKYVMTYEGIKKLENELEYLKTVKRKEITEKIKVALSFGDLSENSEYDSAKNEQAFVEGRIVQLENMLKNASMVDEDEVPLDIVGIGSIVKVKDYDLDEEVEYLIVGSAEADPINNKISNESPVGKGLVGKKPGDVIEIQVPDGVSKYKILNIRR.

Positions 14–76 (IKKLENELEY…QLENMLKNAS (63 aa)) form a coiled coil.

This sequence belongs to the GreA/GreB family.

Its function is as follows. Necessary for efficient RNA polymerase transcription elongation past template-encoded arresting sites. The arresting sites in DNA have the property of trapping a certain fraction of elongating RNA polymerases that pass through, resulting in locked ternary complexes. Cleavage of the nascent transcript by cleavage factors such as GreA or GreB allows the resumption of elongation from the new 3'terminus. GreA releases sequences of 2 to 3 nucleotides. The protein is Transcription elongation factor GreA of Clostridium kluyveri (strain NBRC 12016).